The chain runs to 61 residues: MAVPRRKTSPSRRGMRRSADALKKPTYVEDKDSGELRRPHHLDLKTGMYKGRQVLKVKKED.

Residues 1–16 show a composition bias toward basic residues; it reads MAVPRRKTSPSRRGMR. The interval 1 to 61 is disordered; it reads MAVPRRKTSP…RQVLKVKKED (61 aa). Positions 17–44 are enriched in basic and acidic residues; the sequence is RSADALKKPTYVEDKDSGELRRPHHLDL.

The protein belongs to the bacterial ribosomal protein bL32 family.

This is Large ribosomal subunit protein bL32 from Afipia carboxidovorans (strain ATCC 49405 / DSM 1227 / KCTC 32145 / OM5) (Oligotropha carboxidovorans).